The following is a 275-amino-acid chain: Ribosomal RNA small subunit methyltransferase A (275 aa).

The S-adenosyl-L-methionine site is built by N19, L21, G46, E71, D94, and N117.

This sequence belongs to the class I-like SAM-binding methyltransferase superfamily. rRNA adenine N(6)-methyltransferase family. RsmA subfamily.

Its subcellular location is the cytoplasm. It carries out the reaction adenosine(1518)/adenosine(1519) in 16S rRNA + 4 S-adenosyl-L-methionine = N(6)-dimethyladenosine(1518)/N(6)-dimethyladenosine(1519) in 16S rRNA + 4 S-adenosyl-L-homocysteine + 4 H(+). In terms of biological role, specifically dimethylates two adjacent adenosines (A1518 and A1519) in the loop of a conserved hairpin near the 3'-end of 16S rRNA in the 30S particle. May play a critical role in biogenesis of 30S subunits. The polypeptide is Ribosomal RNA small subunit methyltransferase A (Burkholderia mallei (strain NCTC 10247)).